Consider the following 162-residue polypeptide: Large ribosomal subunit protein uL15 (162 aa).

Residues 1-13 (MKLNEIRDNEGAT) are compositionally biased toward basic and acidic residues. The tract at residues 1–37 (MKLNEIRDNEGATKNRMRVGRGIGSGKGKTAGRGVKG) is disordered. Positions 21-35 (RGIGSGKGKTAGRGV) are enriched in gly residues.

This sequence belongs to the universal ribosomal protein uL15 family. In terms of assembly, part of the 50S ribosomal subunit.

In terms of biological role, binds to the 23S rRNA. This is Large ribosomal subunit protein uL15 from Methylobacterium nodulans (strain LMG 21967 / CNCM I-2342 / ORS 2060).